Consider the following 378-residue polypeptide: Zinc finger protein DPF3 (378 aa).

K99 participates in a covalent cross-link: Glycyl lysine isopeptide (Lys-Gly) (interchain with G-Cter in SUMO2). The disordered stretch occupies residues 145 to 193; the sequence is VLENDENVEEGNEEEDLEEDIPKRKNRTRGRARGSAGGRRRHDAASQED. Residues 148 to 163 show a composition bias toward acidic residues; that stretch reads NDENVEEGNEEEDLEE. The segment covering 168–186 has biased composition (basic residues); it reads RKNRTRGRARGSAGGRRRH. The C2H2-type zinc-finger motif lies at 198 to 221; the sequence is YVCDICGKRYKNRPGLSYHYAHTH. Positions 225–254 are disordered; that stretch reads EEGDEAQDQETRSPPNHRNENHRPQKGPDG. PHD-type zinc fingers lie at residues 259 to 319 and 316 to 366; these read NNYC…CKSC and CKSC…CWEL. The segment at 317-332 is interaction with HDGFL2; the sequence is KSCILCGTSENDDQLL. G323 is modified (phosphoserine).

This sequence belongs to the requiem/DPF family. In terms of assembly, component of the BAF complex, which includes at least actin (ACTB), ARID1A, ARID1B/BAF250, SMARCA2, SMARCA4/BRG1/BAF190A, ACTL6A/BAF53, ACTL6B/BAF53B, SMARCE1/BAF57, SMARCC1/BAF155, SMARCC2/BAF170, SMARCB1/SNF5/INI1, and one or more of SMARCD1/BAF60A, SMARCD2/BAF60B, or SMARCD3/BAF60C. In muscle cells, the BAF complex also contains DPF3. Interacts with acetylated histones H3 and H4. Component of neuron-specific chromatin remodeling complex (nBAF complex) composed of at least, ARID1A/BAF250A or ARID1B/BAF250B, SMARCD1/BAF60A, SMARCD3/BAF60C, SMARCA2/BRM/BAF190B, SMARCA4/BRG1/BAF190A, SMARCB1/BAF47, SMARCC1/BAF155, SMARCE1/BAF57, SMARCC2/BAF170, DPF1/BAF45B, DPF3/BAF45C, ACTL6B/BAF53B and actin. Interacts with HDGFL2, SMARCA4/BRG1/BAF190A, SMARCC1/BAF155 and SMARCD1/BAF60A. Phosphorylation at Ser-323 enhances its interaction with HDGFL2.

The protein localises to the nucleus. In terms of biological role, belongs to the neuron-specific chromatin remodeling complex (nBAF complex). During neural development a switch from a stem/progenitor to a post-mitotic chromatin remodeling mechanism occurs as neurons exit the cell cycle and become committed to their adult state. The transition from proliferating neural stem/progenitor cells to post-mitotic neurons requires a switch in subunit composition of the npBAF and nBAF complexes. As neural progenitors exit mitosis and differentiate into neurons, npBAF complexes which contain ACTL6A/BAF53A and PHF10/BAF45A, are exchanged for homologous alternative ACTL6B/BAF53B and DPF1/BAF45B or DPF3/BAF45C subunits in neuron-specific complexes (nBAF). The npBAF complex is essential for the self-renewal/proliferative capacity of the multipotent neural stem cells. The nBAF complex along with CREST plays a role regulating the activity of genes essential for dendrite growth. Muscle-specific component of the BAF complex, a multiprotein complex involved in transcriptional activation and repression of select genes by chromatin remodeling (alteration of DNA-nucleosome topology). Specifically binds acetylated lysines on histone 3 and 4 (H3K14ac, H3K9ac, H4K5ac, H4K8ac, H4K12ac, H4K16ac). In the complex, it acts as a tissue-specific anchor between histone acetylations and methylations and chromatin remodeling. It thereby probably plays an essential role in heart and skeletal muscle development. Functionally, acts as a regulator of myogenesis in cooperation with HDGFL2. Mediates the interaction of HDGFL2 with the BAF complex. HDGFL2-DPF3a activate myogenic genes by increasing chromatin accessibility through recruitment of SMARCA4/BRG1/BAF190A (ATPase subunit of the BAF complex) to myogenic gene promoters. The protein is Zinc finger protein DPF3 (DPF3) of Homo sapiens (Human).